A 169-amino-acid polypeptide reads, in one-letter code: tRNA (cytidine(56)-2'-O)-methyltransferase (169 aa).

Residues Leu-77, 103–107, and 121–128 contribute to the S-adenosyl-L-methionine site; these read GSEKV and IGNQPHSE.

This sequence belongs to the aTrm56 family. In terms of assembly, homodimer.

It localises to the cytoplasm. It catalyses the reaction cytidine(56) in tRNA + S-adenosyl-L-methionine = 2'-O-methylcytidine(56) in tRNA + S-adenosyl-L-homocysteine + H(+). In terms of biological role, specifically catalyzes the AdoMet-dependent 2'-O-ribose methylation of cytidine at position 56 in tRNAs. The protein is tRNA (cytidine(56)-2'-O)-methyltransferase of Sulfurisphaera tokodaii (strain DSM 16993 / JCM 10545 / NBRC 100140 / 7) (Sulfolobus tokodaii).